Consider the following 141-residue polypeptide: Large ribosomal subunit protein uL11 (141 aa).

It belongs to the universal ribosomal protein uL11 family. As to quaternary structure, part of the ribosomal stalk of the 50S ribosomal subunit. Interacts with L10 and the large rRNA to form the base of the stalk. L10 forms an elongated spine to which L12 dimers bind in a sequential fashion forming a multimeric L10(L12)X complex. One or more lysine residues are methylated.

Functionally, forms part of the ribosomal stalk which helps the ribosome interact with GTP-bound translation factors. In Chloroflexus aggregans (strain MD-66 / DSM 9485), this protein is Large ribosomal subunit protein uL11.